Consider the following 396-residue polypeptide: Nucleolar protein 12 (396 aa).

The segment at 43–104 is disordered; it reads TDKDADGDEK…GKESKKSTKE (62 aa). Residues 47-58 show a composition bias toward acidic residues; that stretch reads ADGDEKMEDAAS. Residues 64-73 are compositionally biased toward basic residues; it reads KKPSKKKLAK. A compositionally biased stretch (basic and acidic residues) spans 87–104; that stretch reads EPEKLVEEGKESKKSTKE. RRM domains lie at 112 to 220 and 228 to 312; these read RTIF…SITH and RSVF…RCKN. Residues 361-396 are disordered; the sequence is TKDDSKPVLKKGKKERSKTGRVTKRSQAFKKSQQKK. Basic residues predominate over residues 368–396; that stretch reads VLKKGKKERSKTGRVTKRSQAFKKSQQKK.

The protein belongs to the RRM RBM34 family.

The protein localises to the nucleus. It is found in the nucleolus. In terms of biological role, involved in pre-25S rRNA processing. This chain is Nucleolar protein 12 (NOP12), found in Candida glabrata (strain ATCC 2001 / BCRC 20586 / JCM 3761 / NBRC 0622 / NRRL Y-65 / CBS 138) (Yeast).